Consider the following 186-residue polypeptide: MSENTQPEQNQPLTGAPSPEELEAAQAANEFDALTQAQAELVTLQAKNTELADSYLRAKAETENARRRADDEIAKARKFALESFAESLLPVVDSLEAGLAHKDATPEQIREGADATLKQLKTTLERNKIVEINPASGSRFDPHQHQAISMVPAEQEANTVVSVLQKGYLISDRVLRPALVTVTAPK.

Positions 1 to 13 (MSENTQPEQNQPL) are enriched in polar residues. Residues 1–22 (MSENTQPEQNQPLTGAPSPEEL) form a disordered region.

The protein belongs to the GrpE family. Homodimer.

Its subcellular location is the cytoplasm. In terms of biological role, participates actively in the response to hyperosmotic and heat shock by preventing the aggregation of stress-denatured proteins, in association with DnaK and GrpE. It is the nucleotide exchange factor for DnaK and may function as a thermosensor. Unfolded proteins bind initially to DnaJ; upon interaction with the DnaJ-bound protein, DnaK hydrolyzes its bound ATP, resulting in the formation of a stable complex. GrpE releases ADP from DnaK; ATP binding to DnaK triggers the release of the substrate protein, thus completing the reaction cycle. Several rounds of ATP-dependent interactions between DnaJ, DnaK and GrpE are required for fully efficient folding. The chain is Protein GrpE from Polaromonas sp. (strain JS666 / ATCC BAA-500).